The following is a 484-amino-acid chain: Glutamyl-tRNA(Gln) amidotransferase subunit A (484 aa).

Residues K76 and S151 each act as charge relay system in the active site. The active-site Acyl-ester intermediate is the S175.

This sequence belongs to the amidase family. GatA subfamily. In terms of assembly, heterotrimer of A, B and C subunits.

It carries out the reaction L-glutamyl-tRNA(Gln) + L-glutamine + ATP + H2O = L-glutaminyl-tRNA(Gln) + L-glutamate + ADP + phosphate + H(+). Allows the formation of correctly charged Gln-tRNA(Gln) through the transamidation of misacylated Glu-tRNA(Gln) in organisms which lack glutaminyl-tRNA synthetase. The reaction takes place in the presence of glutamine and ATP through an activated gamma-phospho-Glu-tRNA(Gln). This is Glutamyl-tRNA(Gln) amidotransferase subunit A from Hahella chejuensis (strain KCTC 2396).